The following is a 439-amino-acid chain: SET domain-containing protein 4 (439 aa).

Positions 1-19 (MQRRRGRTERARKRRRRSS) are enriched in basic residues. Residues 1-25 (MQRRRGRTERARKRRRRSSGSRAVN) are disordered. The region spanning 47–272 (TDLVPASFPG…KHQEVFICYG (226 aa)) is the SET domain. Residue Y271 participates in S-adenosyl-L-methionine binding.

The protein belongs to the class V-like SAM-binding methyltransferase superfamily. SETD4 family. Forms a ternary complex with TBK1 and ZNF268; the interaction with TBK1 is ZNF268-dependent and leads to TBK1 monomethylation. Expressed in the forebrain subventricular zone, in quiescent neural stem cells.

The protein localises to the cytoplasm. It is found in the cytosol. The protein resides in the nucleus. It catalyses the reaction L-lysyl(4)-[histone H3] + S-adenosyl-L-methionine = N(6)-methyl-L-lysyl(4)-[histone H3] + S-adenosyl-L-homocysteine + H(+). The enzyme catalyses N(6)-methyl-L-lysyl(4)-[histone H3] + S-adenosyl-L-methionine = N(6),N(6)-dimethyl-L-lysyl(4)-[histone H3] + S-adenosyl-L-homocysteine + H(+). It carries out the reaction L-lysyl(20)-[histone H4] + S-adenosyl-L-methionine = N(6)-methyl-L-lysyl(20)-[histone H4] + S-adenosyl-L-homocysteine + H(+). The catalysed reaction is N(6)-methyl-L-lysyl(20)-[histone H4] + S-adenosyl-L-methionine = N(6),N(6)-dimethyl-L-lysyl(20)-[histone H4] + S-adenosyl-L-homocysteine + H(+). It catalyses the reaction N(6),N(6)-dimethyl-L-lysyl(20)-[histone H4] + S-adenosyl-L-methionine = N(6),N(6),N(6)-trimethyl-L-lysyl(20)-[histone H4] + S-adenosyl-L-homocysteine + H(+). The enzyme catalyses L-lysyl-[protein] + S-adenosyl-L-methionine = N(6)-methyl-L-lysyl-[protein] + S-adenosyl-L-homocysteine + H(+). In terms of biological role, protein-lysine N-methyltransferase that methylates both histones and non-histone proteins. Via its catalytic activity, regulates many processes, including cell proliferation, cell differentiation, inflammatory response and apoptosis. Regulates the inflammatory response by mediating mono- and dimethylation of 'Lys-4' of histone H3 (H3K4me1 and H3K4me2, respectively), leading to activate the transcription of pro-inflammatory cytokines IL6 and TNF-alpha. Also involved in the regulation of stem cell quiescence by catalyzing the trimethylation of 'Lys-20' of histone H4 (H4K20me3), thereby promoting heterochromatin formation. In the brain, epigenetically controls quiescence of neural stem cells for sustaining a protected neural stem cell population and maintaining a stem cell reservoir for neurogenesis. Involved in proliferation, migration, paracrine and myogenic differentiation of bone marrow mesenchymal stem cells (BMSCs). Through the catalysis of XRCC5/Ku70 trimethylation, regulates BAX-mediated apoptosis. SETD4-catalyzed XRCC5 methylation results in XRCC5 translocation to the cytoplasm, where it interacts with BAX, sequestering it from the mitochondria, hence preventing BAX-mediated apoptosis. In Mus musculus (Mouse), this protein is SET domain-containing protein 4.